The primary structure comprises 188 residues: Protein YecM (188 aa).

The protein to H.influenzae HI_1582/HI_1581.

This Escherichia coli (strain K12) protein is Protein YecM (yecM).